An 802-amino-acid chain; its full sequence is Bifunctional purine biosynthetic protein ADE5,7 (802 aa).

The GARS stretch occupies residues methionine 1–isoleucine 450. The region spanning lysine 114–glutamate 330 is the ATP-grasp domain. Glutamine 141 to serine 203 is an ATP binding site. 2 residues coordinate Mg(2+): glutamate 298 and asparagine 300. An AIRS region spans residues threonine 451–tyrosine 802. Residues serine 455 and serine 458 each carry the phosphoserine modification.

In the N-terminal section; belongs to the GARS family. The protein in the C-terminal section; belongs to the AIR synthase family. Mg(2+) serves as cofactor. Requires Mn(2+) as cofactor.

It is found in the cytoplasm. The catalysed reaction is 5-phospho-beta-D-ribosylamine + glycine + ATP = N(1)-(5-phospho-beta-D-ribosyl)glycinamide + ADP + phosphate + H(+). It carries out the reaction 2-formamido-N(1)-(5-O-phospho-beta-D-ribosyl)acetamidine + ATP = 5-amino-1-(5-phospho-beta-D-ribosyl)imidazole + ADP + phosphate + H(+). It functions in the pathway purine metabolism; IMP biosynthesis via de novo pathway; 5-amino-1-(5-phospho-D-ribosyl)imidazole from N(2)-formyl-N(1)-(5-phospho-D-ribosyl)glycinamide: step 2/2. The protein operates within purine metabolism; IMP biosynthesis via de novo pathway; N(1)-(5-phospho-D-ribosyl)glycinamide from 5-phospho-alpha-D-ribose 1-diphosphate: step 2/2. Its function is as follows. Catalyzes the second and fifth step in the 'de novo' purine biosynthesis pathway; contains phosphoribosylamine--glycine ligase (GARS) and phosphoribosylformylglycinamidine cyclo-ligase (AIRS) activities. This is Bifunctional purine biosynthetic protein ADE5,7 from Saccharomyces cerevisiae (strain ATCC 204508 / S288c) (Baker's yeast).